The following is a 101-amino-acid chain: Urease subunit beta (101 aa).

The protein belongs to the urease beta subunit family. In terms of assembly, heterotrimer of UreA (gamma), UreB (beta) and UreC (alpha) subunits. Three heterotrimers associate to form the active enzyme.

It localises to the cytoplasm. It carries out the reaction urea + 2 H2O + H(+) = hydrogencarbonate + 2 NH4(+). It participates in nitrogen metabolism; urea degradation; CO(2) and NH(3) from urea (urease route): step 1/1. In Granulibacter bethesdensis (strain ATCC BAA-1260 / CGDNIH1), this protein is Urease subunit beta.